The primary structure comprises 556 residues: 2-succinyl-5-enolpyruvyl-6-hydroxy-3-cyclohexene-1-carboxylate synthase (556 aa).

Belongs to the TPP enzyme family. MenD subfamily. As to quaternary structure, homodimer. It depends on Mg(2+) as a cofactor. Requires Mn(2+) as cofactor. Thiamine diphosphate is required as a cofactor.

The catalysed reaction is isochorismate + 2-oxoglutarate + H(+) = 5-enolpyruvoyl-6-hydroxy-2-succinyl-cyclohex-3-ene-1-carboxylate + CO2. It functions in the pathway quinol/quinone metabolism; 1,4-dihydroxy-2-naphthoate biosynthesis; 1,4-dihydroxy-2-naphthoate from chorismate: step 2/7. The protein operates within quinol/quinone metabolism; menaquinone biosynthesis. Catalyzes the thiamine diphosphate-dependent decarboxylation of 2-oxoglutarate and the subsequent addition of the resulting succinic semialdehyde-thiamine pyrophosphate anion to isochorismate to yield 2-succinyl-5-enolpyruvyl-6-hydroxy-3-cyclohexene-1-carboxylate (SEPHCHC). The polypeptide is 2-succinyl-5-enolpyruvyl-6-hydroxy-3-cyclohexene-1-carboxylate synthase (Escherichia coli O157:H7).